Reading from the N-terminus, the 583-residue chain is Membrane protein insertase YidC (583 aa).

Residues 5 to 25 (SVTGLALIALIMIVWLQFMSP) traverse the membrane as a helical segment. Residues 28–50 (KSVQPDNRPKAQTTATVSQEKTE) form a disordered region. The segment covering 37–46 (KAQTTATVSQ) has biased composition (polar residues). 5 helical membrane passes run 341–361 (PFAE…ISNY), 362–382 (GLII…LSMA), 427–447 (LGGC…FYVF), 477–497 (IPVY…TVFI), and 515–535 (LYIF…GLGL).

It belongs to the OXA1/ALB3/YidC family. Type 1 subfamily. In terms of assembly, interacts with the Sec translocase complex via SecD. Specifically interacts with transmembrane segments of nascent integral membrane proteins during membrane integration.

The protein resides in the cell inner membrane. Required for the insertion and/or proper folding and/or complex formation of integral membrane proteins into the membrane. Involved in integration of membrane proteins that insert both dependently and independently of the Sec translocase complex, as well as at least some lipoproteins. Aids folding of multispanning membrane proteins. The sequence is that of Membrane protein insertase YidC from Chlorobium limicola (strain DSM 245 / NBRC 103803 / 6330).